Reading from the N-terminus, the 130-residue chain is Large ribosomal subunit protein bL19 (130 aa).

The protein belongs to the bacterial ribosomal protein bL19 family.

Functionally, this protein is located at the 30S-50S ribosomal subunit interface and may play a role in the structure and function of the aminoacyl-tRNA binding site. In Mycoplasma mycoides subsp. mycoides SC (strain CCUG 32753 / NCTC 10114 / PG1), this protein is Large ribosomal subunit protein bL19.